The sequence spans 254 residues: Tryptophan synthase alpha chain (254 aa).

Active-site proton acceptor residues include glutamate 48 and aspartate 59.

Belongs to the TrpA family. Tetramer of two alpha and two beta chains.

The enzyme catalyses (1S,2R)-1-C-(indol-3-yl)glycerol 3-phosphate + L-serine = D-glyceraldehyde 3-phosphate + L-tryptophan + H2O. Its pathway is amino-acid biosynthesis; L-tryptophan biosynthesis; L-tryptophan from chorismate: step 5/5. In terms of biological role, the alpha subunit is responsible for the aldol cleavage of indoleglycerol phosphate to indole and glyceraldehyde 3-phosphate. In Desulfotalea psychrophila (strain LSv54 / DSM 12343), this protein is Tryptophan synthase alpha chain.